Here is a 546-residue protein sequence, read N- to C-terminus: Chaperonin GroEL (546 aa).

ATP contacts are provided by residues 29–32, lysine 50, 86–90, glycine 415, and aspartate 495; these read TLGP and DGTTT. Residues 526-546 form a disordered region; the sequence is EDNAGGGGMPQGMGGGMPGMM. The segment covering 529–546 has biased composition (gly residues); the sequence is AGGGGMPQGMGGGMPGMM.

The protein belongs to the chaperonin (HSP60) family. As to quaternary structure, forms a cylinder of 14 subunits composed of two heptameric rings stacked back-to-back. Interacts with the co-chaperonin GroES.

It is found in the cytoplasm. It catalyses the reaction ATP + H2O + a folded polypeptide = ADP + phosphate + an unfolded polypeptide.. Its function is as follows. Together with its co-chaperonin GroES, plays an essential role in assisting protein folding. The GroEL-GroES system forms a nano-cage that allows encapsulation of the non-native substrate proteins and provides a physical environment optimized to promote and accelerate protein folding. The protein is Chaperonin GroEL of Christiangramia forsetii (strain DSM 17595 / CGMCC 1.15422 / KT0803) (Gramella forsetii).